A 496-amino-acid polypeptide reads, in one-letter code: Legumin (496 aa).

Residues 1-21 (MAKLLALSLSFCFLLFGTCFA) form the signal peptide. 2 disulfides stabilise this stretch: cysteine 31/cysteine 64 and cysteine 107/cysteine 318. The 195-residue stretch at 36 to 230 (LNALKPDNRI…ALNVNRRIVN (195 aa)) folds into the Cupin type-1 1 domain. Positions 240-311 (EKGAIVKVKG…RGGSKSQRDN (72 aa)) are disordered. A compositionally biased stretch (basic and acidic residues) spans 257–269 (PEKEPRQKRGSRQ). In terms of domain architecture, Cupin type-1 2 spans 324–453 (QNIGSSSSPD…INVCQKKLLQ (130 aa)).

It belongs to the 11S seed storage protein (globulins) family. Hexamer; each subunit is composed of an acidic and a basic chain derived from a single precursor and linked by a disulfide bond.

In terms of biological role, seed storage protein. Alpha-amylase inhibitor. This is Legumin from Cicer arietinum (Chickpea).